We begin with the raw amino-acid sequence, 320 residues long: Cytochrome f (320 aa).

A signal peptide spans 1-35 (MQNRNTFSWVKEEMTRFISVSIMIYVITRTSISNA). Heme-binding residues include Tyr36, Cys56, Cys59, and His60. A helical membrane pass occupies residues 286–306 (VQGLLFFLASVILAQIFLVLK).

The protein belongs to the cytochrome f family. As to quaternary structure, the 4 large subunits of the cytochrome b6-f complex are cytochrome b6, subunit IV (17 kDa polypeptide, petD), cytochrome f and the Rieske protein, while the 4 small subunits are PetG, PetL, PetM and PetN. The complex functions as a dimer. Heme serves as cofactor.

The protein localises to the plastid. It localises to the chloroplast thylakoid membrane. In terms of biological role, component of the cytochrome b6-f complex, which mediates electron transfer between photosystem II (PSII) and photosystem I (PSI), cyclic electron flow around PSI, and state transitions. The sequence is that of Cytochrome f from Calycanthus floridus var. glaucus (Eastern sweetshrub).